The sequence spans 342 residues: MLVLGIESSCDETGLALYDTERGLLAHALHSQIAMHREYGGVVPELASRDHIRRALPLLEEVMERAGTAAGDIDAIAYTQGPGLAGALLVGASVANALAMAWDKPTIGIHHLEGHLLSPLLVDEPPPFPFVALLVSGGHTQLMRVTDVGVYETLGETLDDAAGEAFDKTAKLLGLGYPGGPEVSRMAEFGTPGAVVLPRPMLHSGDLDFSFSGLKTAVLTHAKKLGGANICEQAKADLARGFVDAAVEVLAAKSLAALKKTGLNRLVVAGGVGANRQLREALSAAAKKRNFYVHYPDLSLCTDNGAMIALAGALRLQRWPDQSGKDYAFTVKPRWDLTSLAR.

Fe cation-binding residues include His-111 and His-115. Substrate contacts are provided by residues Leu-134–Gly-138, Asp-167, Gly-180, and Asn-275. Asp-303 contacts Fe cation.

This sequence belongs to the KAE1 / TsaD family. It depends on Fe(2+) as a cofactor.

The protein resides in the cytoplasm. The catalysed reaction is L-threonylcarbamoyladenylate + adenosine(37) in tRNA = N(6)-L-threonylcarbamoyladenosine(37) in tRNA + AMP + H(+). Functionally, required for the formation of a threonylcarbamoyl group on adenosine at position 37 (t(6)A37) in tRNAs that read codons beginning with adenine. Is involved in the transfer of the threonylcarbamoyl moiety of threonylcarbamoyl-AMP (TC-AMP) to the N6 group of A37, together with TsaE and TsaB. TsaD likely plays a direct catalytic role in this reaction. The protein is tRNA N6-adenosine threonylcarbamoyltransferase of Paraburkholderia xenovorans (strain LB400).